A 388-amino-acid polypeptide reads, in one-letter code: Succinate--CoA ligase [ADP-forming] subunit beta (388 aa).

The ATP-grasp domain occupies 9–244 (KQLFARSGLP…QSQEDPREAQ (236 aa)). Residues Lys-46, 53–55 (GRG), Glu-99, Thr-102, and Glu-107 each bind ATP. The Mg(2+) site is built by Asn-199 and Asp-213. Substrate is bound by residues Asn-264 and 321–323 (GIV).

Belongs to the succinate/malate CoA ligase beta subunit family. In terms of assembly, heterotetramer of two alpha and two beta subunits. It depends on Mg(2+) as a cofactor.

The catalysed reaction is succinate + ATP + CoA = succinyl-CoA + ADP + phosphate. It catalyses the reaction GTP + succinate + CoA = succinyl-CoA + GDP + phosphate. It functions in the pathway carbohydrate metabolism; tricarboxylic acid cycle; succinate from succinyl-CoA (ligase route): step 1/1. In terms of biological role, succinyl-CoA synthetase functions in the citric acid cycle (TCA), coupling the hydrolysis of succinyl-CoA to the synthesis of either ATP or GTP and thus represents the only step of substrate-level phosphorylation in the TCA. The beta subunit provides nucleotide specificity of the enzyme and binds the substrate succinate, while the binding sites for coenzyme A and phosphate are found in the alpha subunit. In Cronobacter sakazakii (strain ATCC BAA-894) (Enterobacter sakazakii), this protein is Succinate--CoA ligase [ADP-forming] subunit beta.